The primary structure comprises 828 residues: Periplasmic nitrate reductase (828 aa).

A signal peptide (tat-type signal) is located at residues 1-31 (MKLSRRSFMKANAVAAAAAAAGLSVPGVARA). One can recognise a 4Fe-4S Mo/W bis-MGD-type domain in the interval 39-95 (IKWDKAPCRFCGTGCGVLVGTQQGRVVACQGDPDAPVNRGLNCIKGYFLPKIMYGKD). Cysteine 46, cysteine 49, cysteine 53, and cysteine 81 together coordinate [4Fe-4S] cluster. Mo-bis(molybdopterin guanine dinucleotide)-binding positions include lysine 83, glutamine 150, asparagine 175, cysteine 179, 212–219 (WGANMAEM), 243–247 (STYQH), 262–264 (QSD), methionine 372, glutamine 376, asparagine 482, 508–509 (SD), lysine 531, aspartate 558, and 718–727 (TGRVLEHWHT). Phenylalanine 794 is a binding site for substrate. Residues asparagine 802 and lysine 819 each coordinate Mo-bis(molybdopterin guanine dinucleotide).

Belongs to the prokaryotic molybdopterin-containing oxidoreductase family. NasA/NapA/NarB subfamily. Component of the periplasmic nitrate reductase NapAB complex composed of NapA and NapB. [4Fe-4S] cluster is required as a cofactor. Requires Mo-bis(molybdopterin guanine dinucleotide) as cofactor. Post-translationally, predicted to be exported by the Tat system. The position of the signal peptide cleavage has not been experimentally proven.

It is found in the periplasm. It carries out the reaction 2 Fe(II)-[cytochrome] + nitrate + 2 H(+) = 2 Fe(III)-[cytochrome] + nitrite + H2O. Its function is as follows. Catalytic subunit of the periplasmic nitrate reductase complex NapAB. Receives electrons from NapB and catalyzes the reduction of nitrate to nitrite. This Escherichia coli O157:H7 (strain EC4115 / EHEC) protein is Periplasmic nitrate reductase.